A 345-amino-acid chain; its full sequence is Probable 3'(2'),5'-bisphosphate nucleotidase 4 (345 aa).

The active-site Proton acceptor is Asp-46. 4 residues coordinate Mg(2+): Glu-71, Asp-134, Val-136, and Asp-137. Thr-139 acts as the Proton acceptor in catalysis. 4 residues coordinate adenosine 3',5'-bisphosphate: Thr-139, Ser-247, Lys-250, and Arg-264. Residues Ser-247, Lys-250, and Arg-264 each coordinate AMP.

This sequence belongs to the inositol monophosphatase superfamily. Mg(2+) is required as a cofactor.

The catalysed reaction is 3'-phosphoadenylyl sulfate + H2O = adenosine 5'-phosphosulfate + phosphate. The enzyme catalyses adenosine 3',5'-bisphosphate + H2O = AMP + phosphate. It catalyses the reaction adenosine 2',5'-bisphosphate + H2O = AMP + phosphate. It carries out the reaction 1D-myo-inositol 1,4-bisphosphate + H2O = 1D-myo-inositol 4-phosphate + phosphate. The catalysed reaction is 1D-myo-inositol 1,3,4-trisphosphate + H2O = 1D-myo-inositol 3,4-bisphosphate + phosphate. It participates in signal transduction; phosphatidylinositol signaling pathway. Phosphatase that converts adenosine 3'-phosphate 5'-phosphosulfate (PAPS) to adenosine 5'-phosphosulfate (APS) and 3'(2')-phosphoadenosine 5'-phosphate (PAP) to AMP. Is also able to hydrolyze inositol 1,4-bisphosphate and inositol 1,3,4-trisphosphate. This Arabidopsis thaliana (Mouse-ear cress) protein is Probable 3'(2'),5'-bisphosphate nucleotidase 4 (SAL4).